The sequence spans 147 residues: UPF0735 ACT domain-containing protein GK2605 (147 aa).

One can recognise an ACT domain in the interval 69–144; it reads TLFFHLEDRS…FVEKVEIVGS (76 aa).

Belongs to the UPF0735 family.

This Geobacillus kaustophilus (strain HTA426) protein is UPF0735 ACT domain-containing protein GK2605.